Consider the following 468-residue polypeptide: GDNF family receptor alpha-1 (468 aa).

The first 24 residues, 1–24 (MFLATLYFVLPLLDLLMSAEVSGG), serve as a signal peptide directing secretion. 3 tandem repeats follow at residues 25-113 (DRLD…LQGN), 150-238 (KGNN…YEER), and 239-342 (ERPN…KNAI). A disulfide bond links C36 and C42. An N-linked (GlcNAc...) asparagine glycan is attached at N59. Disulfide bonds link C154–C214, C161–C167, C178–C192, C187–C233, C216–C221, C243–C313, C250–C256, C267–C285, C277–C337, and C315–C325. N-linked (GlcNAc...) asparagine glycosylation is found at N347 and N406. S430 is lipidated: GPI-anchor amidated serine. Positions 431-468 (HITTKSMAAPPSCGLSSLPVMVFTALAALLSVSLAETS) are cleaved as a propeptide — removed in mature form.

The protein belongs to the GDNFR family. Interacts with GDNF ligand and RET: forms a 2:2:2 ternary complex composed of GDNF ligand, GFRA1 and RET receptor. Interacts with SORL1, either alone or in complex with GDNF. Interaction between SORL1 and GFRA1 leads to GFRA1 internalization, but not degradation. As to expression, expressed in the brain, in hippocampal neurons (at protein level). Isoform 1 and isoform 2 are expressed in heart, brain, lung, liver, kidney and testis.

It is found in the cell membrane. The protein localises to the golgi apparatus. Its subcellular location is the trans-Golgi network. The protein resides in the endosome. It localises to the multivesicular body. Its function is as follows. Coreceptor for GDNF, a neurotrophic factor that enhances survival and morphological differentiation of dopaminergic neurons and increases their high-affinity dopamine uptake. GDNF-binding leads to autophosphorylation and activation of the RET receptor. This is GDNF family receptor alpha-1 (Gfra1) from Mus musculus (Mouse).